The sequence spans 472 residues: F420-non-reducing hydrogenase subunit A (472 aa).

The Ni(2+) site is built by cysteine 61, cysteine 64, cysteine 442, and cysteine 445.

The protein belongs to the [NiFe]/[NiFeSe] hydrogenase large subunit family. The F420-non-reducing hydrogenase is composed of three subunits; MvhA, MvhD and MvhG. It forms a complex with the heterodisulfide reductase (hdr). The cofactor is Ni(2+).

Its function is as follows. Part of a complex that provides reducing equivalents for heterodisulfide reductase. This is F420-non-reducing hydrogenase subunit A (mvhA) from Methanothermobacter thermautotrophicus (strain ATCC 29096 / DSM 1053 / JCM 10044 / NBRC 100330 / Delta H) (Methanobacterium thermoautotrophicum).